The primary structure comprises 490 residues: MTSKSSPLIFERSREGRYAYSLPKSDIKTNSVESLLDDKFIRKNKAEFPEVAELDLVRHYTELSNKNFGVDNGFYPLGSCTMKYNPKINEKVARIPGFSESHPLQDEDQVQGSLEIIYSLQEELKEITGMDEVTLQPAAGAHGEWTALMIFKAYHENNGEGHRDEVIVPDSAHGTNPASASFAGFKSVTVKSNERGEVDIDDLKRVVNENTAAIMLTNPNTLGIFEKNIMEIREIVHNAGGLLYYDGANLNAIMDKVRPGDMGFDAVHLNLHKTFTGPHGGGGPGSGPVGVVKELASYLPKPMVIKDGDKFKYDNDIKNSIGRVKPFYGNFGIYLRAYTYIRTMGATGLKEVSEAAVLNANYIKARLSKHFEIPYKQYCKHEFVLSGVRQKEFGVRTLDMAKRLLDFGVHPPTIYFPLNVEEGMMIEPTETESKETLDYFIDTLISIAEEAKNDPDKVLEAPHTTVIDRLDEATAARKPILKFENLKQEK.

Position 273 is an N6-(pyridoxal phosphate)lysine (lysine 273).

This sequence belongs to the GcvP family. C-terminal subunit subfamily. The glycine cleavage system is composed of four proteins: P, T, L and H. In this organism, the P 'protein' is a heterodimer of two subunits. It depends on pyridoxal 5'-phosphate as a cofactor.

It catalyses the reaction N(6)-[(R)-lipoyl]-L-lysyl-[glycine-cleavage complex H protein] + glycine + H(+) = N(6)-[(R)-S(8)-aminomethyldihydrolipoyl]-L-lysyl-[glycine-cleavage complex H protein] + CO2. Functionally, the glycine cleavage system catalyzes the degradation of glycine. The P protein binds the alpha-amino group of glycine through its pyridoxal phosphate cofactor; CO(2) is released and the remaining methylamine moiety is then transferred to the lipoamide cofactor of the H protein. The sequence is that of Probable glycine dehydrogenase (decarboxylating) subunit 2 from Staphylococcus aureus (strain MSSA476).